We begin with the raw amino-acid sequence, 299 residues long: Putative peptidyl-prolyl cis-trans isomerase jhp_0161 (299 aa).

Residues 1–21 (MKKNILNLALVGALSASFLMA) form the signal peptide. The region spanning 154–253 (KQEAHARHIL…FGYHIIYLIS (100 aa)) is the PpiC domain.

The catalysed reaction is [protein]-peptidylproline (omega=180) = [protein]-peptidylproline (omega=0). The protein is Putative peptidyl-prolyl cis-trans isomerase jhp_0161 of Helicobacter pylori (strain J99 / ATCC 700824) (Campylobacter pylori J99).